Consider the following 336-residue polypeptide: Ribosomal RNA large subunit methyltransferase F (336 aa).

The protein belongs to the methyltransferase superfamily. METTL16/RlmF family.

The protein localises to the cytoplasm. It carries out the reaction adenosine(1618) in 23S rRNA + S-adenosyl-L-methionine = N(6)-methyladenosine(1618) in 23S rRNA + S-adenosyl-L-homocysteine + H(+). Functionally, specifically methylates the adenine in position 1618 of 23S rRNA. The polypeptide is Ribosomal RNA large subunit methyltransferase F (Serratia proteamaculans (strain 568)).